The sequence spans 152 residues: Superoxide dismutase [Cu-Zn] 2 (152 aa).

Residues H45, H47, and H62 each contribute to the Cu cation site. C56 and C145 are oxidised to a cystine. Zn(2+)-binding residues include H62, H70, H79, and D82. A Cu cation-binding site is contributed by H119.

This sequence belongs to the Cu-Zn superoxide dismutase family. Homodimer. Requires Cu cation as cofactor. The cofactor is Zn(2+).

The protein resides in the cytoplasm. It carries out the reaction 2 superoxide + 2 H(+) = H2O2 + O2. In terms of biological role, destroys radicals which are normally produced within the cells and which are toxic to biological systems. The polypeptide is Superoxide dismutase [Cu-Zn] 2 (SODCC.5) (Solanum lycopersicum (Tomato)).